The chain runs to 2434 residues: Protein Ycf2 (2434 aa).

1693 to 1700 (GPTETGRS) is an ATP binding site.

It belongs to the Ycf2 family.

It is found in the plastid. The protein resides in the chloroplast stroma. Functionally, probable ATPase of unknown function. Its presence in a non-photosynthetic plant (Epifagus virginiana) and experiments in tobacco indicate that it has an essential function which is probably not related to photosynthesis. The sequence is that of Protein Ycf2 from Cycas taitungensis (Prince sago).